Here is a 160-residue protein sequence, read N- to C-terminus: Small ribosomal subunit protein uS7 (160 aa).

Belongs to the universal ribosomal protein uS7 family. Part of the 30S ribosomal subunit. Contacts proteins S9 and S11.

In terms of biological role, one of the primary rRNA binding proteins, it binds directly to 16S rRNA where it nucleates assembly of the head domain of the 30S subunit. Is located at the subunit interface close to the decoding center, probably blocks exit of the E-site tRNA. The protein is Small ribosomal subunit protein uS7 of Rickettsia akari (strain Hartford).